The chain runs to 95 residues: Small ribosomal subunit protein bS6 (95 aa).

It belongs to the bacterial ribosomal protein bS6 family.

Functionally, binds together with bS18 to 16S ribosomal RNA. The polypeptide is Small ribosomal subunit protein bS6 (Bacillus cytotoxicus (strain DSM 22905 / CIP 110041 / 391-98 / NVH 391-98)).